The following is a 342-amino-acid chain: MTTLTITRPDDWHVHLRDGEVLKDTVRDISRYNGRALIMPNTVPPVTNTEMALAYRDRILAEQHGEQFEPLMALYLTDNTTPDEIRKAKATGKIVAAKLYPAGATTNSDSGVTDAKNIYHVFEAMEEVGMLLLVHGEVTHNHVDIFDREKEFLDTVLAPIVNDFPNLKIVLEHITTSDAANFVNNASDNVAATITAHHLLFNRNHMLVGGIKPHFYCLPILKRNTHQQALIEAATSGSKKFFLGTDSAPHAKGAKESACGCAGSYTAHAALELYAEVFENEGKLENLEAFASLNGPDFYGIARNTDTVTLEKASWDVPETMPFGSDIVVPIRANEKIEWEVK.

Zn(2+)-binding residues include His-13 and His-15. Substrate contacts are provided by residues 15-17 (HLR) and Asn-41. Positions 98, 135, and 173 each coordinate Zn(2+). Lys-98 bears the N6-carboxylysine mark. Residue His-135 participates in substrate binding. Leu-218 is a substrate binding site. Asp-246 is a Zn(2+) binding site. Residue Asp-246 is part of the active site. The substrate site is built by His-250 and Ala-262.

Belongs to the metallo-dependent hydrolases superfamily. DHOase family. Class II DHOase subfamily. Homodimer. It depends on Zn(2+) as a cofactor.

It carries out the reaction (S)-dihydroorotate + H2O = N-carbamoyl-L-aspartate + H(+). It participates in pyrimidine metabolism; UMP biosynthesis via de novo pathway; (S)-dihydroorotate from bicarbonate: step 3/3. In terms of biological role, catalyzes the reversible cyclization of carbamoyl aspartate to dihydroorotate. This Vibrio campbellii (strain ATCC BAA-1116) protein is Dihydroorotase.